A 783-amino-acid chain; its full sequence is Endonuclease MutS2 (783 aa).

333–340 provides a ligand contact to ATP; sequence GPNTGGKT. Residues 708 to 783 form the Smr domain; it reads IDLRGKNIEE…GLGATFIYLK (76 aa).

Belongs to the DNA mismatch repair MutS family. MutS2 subfamily. In terms of assembly, homodimer. Binds to stalled ribosomes, contacting rRNA.

In terms of biological role, endonuclease that is involved in the suppression of homologous recombination and thus may have a key role in the control of bacterial genetic diversity. Functionally, acts as a ribosome collision sensor, splitting the ribosome into its 2 subunits. Detects stalled/collided 70S ribosomes which it binds and splits by an ATP-hydrolysis driven conformational change. Acts upstream of the ribosome quality control system (RQC), a ribosome-associated complex that mediates the extraction of incompletely synthesized nascent chains from stalled ribosomes and their subsequent degradation. Probably generates substrates for RQC. The polypeptide is Endonuclease MutS2 (Finegoldia magna (strain ATCC 29328 / DSM 20472 / WAL 2508) (Peptostreptococcus magnus)).